Reading from the N-terminus, the 159-residue chain is Large ribosomal subunit protein uL10 (159 aa).

It belongs to the universal ribosomal protein uL10 family. Part of the ribosomal stalk of the 50S ribosomal subunit. The N-terminus interacts with L11 and the large rRNA to form the base of the stalk. The C-terminus forms an elongated spine to which L12 dimers bind in a sequential fashion forming a multimeric L10(L12)X complex.

Its function is as follows. Forms part of the ribosomal stalk, playing a central role in the interaction of the ribosome with GTP-bound translation factors. The chain is Large ribosomal subunit protein uL10 from Campylobacter jejuni subsp. jejuni serotype O:6 (strain 81116 / NCTC 11828).